A 200-amino-acid polypeptide reads, in one-letter code: Signal peptidase complex catalytic subunit SEC11 (200 aa).

At 1 to 15 (MFAELAPYLSNPRQT) the chain is on the cytoplasmic side. The helical; Signal-anchor for type II membrane protein transmembrane segment at 16-33 (LAQLLNFALVLSTAFMGW) threads the bilayer. Residues 34-200 (KALSVYTNSS…MGVMVMLQRE (167 aa)) lie on the Lumenal side of the membrane. Asparagine 41 carries N-linked (GlcNAc...) asparagine glycosylation. Catalysis depends on charge relay system residues serine 53 and histidine 92. A disordered region spans residues 101-134 (GDGGKKSQRRLEREADKRSGPGLSSPVSHQMLTK). Residues 103 to 119 (GGKKSQRRLEREADKRS) show a composition bias toward basic and acidic residues. Aspartate 142 acts as the Charge relay system in catalysis. The interval 186–197 (VLLGIMGVMVML) is C-terminal short (CTS) helix.

The protein belongs to the peptidase S26B family. In terms of assembly, component of the signal peptidase complex (SPC) composed of a catalytic subunit SEC11 and three accessory subunits SPC1, SPC2 and SPC3. The complex induces a local thinning of the ER membrane which is used to measure the length of the signal peptide (SP) h-region of protein substrates. This ensures the selectivity of the complex towards h-regions shorter than 18-20 amino acids. SPC associates with the translocon complex.

The protein resides in the endoplasmic reticulum membrane. The catalysed reaction is Cleavage of hydrophobic, N-terminal signal or leader sequences from secreted and periplasmic proteins.. Catalytic component of the signal peptidase complex (SPC) which catalyzes the cleavage of N-terminal signal sequences from nascent proteins as they are translocated into the lumen of the endoplasmic reticulum. Specifically cleaves N-terminal signal peptides that contain a hydrophobic alpha-helix (h-region) shorter than 18-20 amino acids. The protein is Signal peptidase complex catalytic subunit SEC11 (SEC11) of Arthroderma benhamiae (strain ATCC MYA-4681 / CBS 112371) (Trichophyton mentagrophytes).